A 156-amino-acid polypeptide reads, in one-letter code: Small ribosomal subunit protein uS7 (156 aa).

Belongs to the universal ribosomal protein uS7 family. As to quaternary structure, part of the 30S ribosomal subunit. Contacts proteins S9 and S11.

In terms of biological role, one of the primary rRNA binding proteins, it binds directly to 16S rRNA where it nucleates assembly of the head domain of the 30S subunit. Is located at the subunit interface close to the decoding center, probably blocks exit of the E-site tRNA. The chain is Small ribosomal subunit protein uS7 from Photorhabdus laumondii subsp. laumondii (strain DSM 15139 / CIP 105565 / TT01) (Photorhabdus luminescens subsp. laumondii).